The following is a 377-amino-acid chain: uncharacterized protein (377 aa).

A run of 10 helical transmembrane segments spans residues 4 to 24 (LLTPWRGVAAGFLLNGILLGT), 41 to 61 (ASFGVLLLLLGLGALISFPIT), 85 to 105 (IAALGLAPTIPLLAIALFLFG), 134 to 154 (FHAMWSVGAVLGAAGGYIATV), 159 to 179 (VYVHFLVTAVTIGGLLGPFLL), 192 to 212 (GAVGLVLPNSGLFLVGLIALA), 278 to 298 (VFGILLIVLGETLPLVVAGFV), 301 to 321 (GVGYAAVLPLAFSRAAADLVV), 327 to 347 (IASVAIFAYGAMTLGPFAIGL), and 356 to 376 (LCFFIVGLFAALVAVLAPVLK).

It to R.meliloti MosC.

It is found in the cell membrane. Could be involved in a transport system. This is an uncharacterized protein from Sinorhizobium fredii (strain NBRC 101917 / NGR234).